A 287-amino-acid polypeptide reads, in one-letter code: Acetylglutamate kinase (287 aa).

Residues Gly64 to Gly65, Arg86, and Asn181 contribute to the substrate site.

It belongs to the acetylglutamate kinase family. ArgB subfamily.

It is found in the cytoplasm. The catalysed reaction is N-acetyl-L-glutamate + ATP = N-acetyl-L-glutamyl 5-phosphate + ADP. It participates in amino-acid biosynthesis; L-arginine biosynthesis; N(2)-acetyl-L-ornithine from L-glutamate: step 2/4. Catalyzes the ATP-dependent phosphorylation of N-acetyl-L-glutamate. The polypeptide is Acetylglutamate kinase (Desulforamulus reducens (strain ATCC BAA-1160 / DSM 100696 / MI-1) (Desulfotomaculum reducens)).